The primary structure comprises 140 residues: Large ribosomal subunit protein uL11 (140 aa).

It belongs to the universal ribosomal protein uL11 family. Part of the ribosomal stalk of the 50S ribosomal subunit. Interacts with L10 and the large rRNA to form the base of the stalk. L10 forms an elongated spine to which L12 dimers bind in a sequential fashion forming a multimeric L10(L12)X complex. One or more lysine residues are methylated.

In terms of biological role, forms part of the ribosomal stalk which helps the ribosome interact with GTP-bound translation factors. The polypeptide is Large ribosomal subunit protein uL11 (Geobacter sp. (strain M21)).